Consider the following 423-residue polypeptide: Dihydroorotase (423 aa).

Zn(2+) contacts are provided by histidine 56 and histidine 58. Residues 58–60 and asparagine 89 contribute to the substrate site; that span reads HFR. Positions 137, 168, 227, and 302 each coordinate Zn(2+). The residue at position 137 (lysine 137) is an N6-carboxylysine. Aspartate 302 is a catalytic residue. Histidine 306 lines the substrate pocket.

The protein belongs to the metallo-dependent hydrolases superfamily. DHOase family. Class I DHOase subfamily. It depends on Zn(2+) as a cofactor.

The enzyme catalyses (S)-dihydroorotate + H2O = N-carbamoyl-L-aspartate + H(+). It participates in pyrimidine metabolism; UMP biosynthesis via de novo pathway; (S)-dihydroorotate from bicarbonate: step 3/3. Its function is as follows. Catalyzes the reversible cyclization of carbamoyl aspartate to dihydroorotate. In Methanocaldococcus jannaschii (strain ATCC 43067 / DSM 2661 / JAL-1 / JCM 10045 / NBRC 100440) (Methanococcus jannaschii), this protein is Dihydroorotase.